The primary structure comprises 341 residues: Adenine deaminase (341 aa).

His-17, His-19, and His-197 together coordinate Zn(2+). Glu-200 serves as the catalytic Proton donor. Residue Asp-278 participates in Zn(2+) binding. Asp-279 serves as a coordination point for substrate.

This sequence belongs to the metallo-dependent hydrolases superfamily. Adenosine and AMP deaminases family. Adenine deaminase type 2 subfamily. Requires Zn(2+) as cofactor.

It catalyses the reaction adenine + H2O + H(+) = hypoxanthine + NH4(+). Functionally, catalyzes the hydrolytic deamination of adenine to hypoxanthine. Plays an important role in the purine salvage pathway and in nitrogen catabolism. This chain is Adenine deaminase, found in Chlorobium luteolum (strain DSM 273 / BCRC 81028 / 2530) (Pelodictyon luteolum).